Consider the following 299-residue polypeptide: Fibrinogen silencer-binding protein (299 aa).

Lys-94 is covalently cross-linked (Glycyl lysine isopeptide (Lys-Gly) (interchain with G-Cter in SUMO2)).

Interacts with APBA1 (via PDZ 1 and 2 domains). In terms of tissue distribution, expressed in multiple tissues including brain.

It localises to the nucleus. Functionally, transcriptional repressor that down-regulates the expression of the fibrinogen gamma chain. Represses transcription of GSK3B gene promoter via its interaction with APBA1. This is Fibrinogen silencer-binding protein (FSBP) from Homo sapiens (Human).